The primary structure comprises 201 residues: ATP-dependent Clp protease proteolytic subunit (201 aa).

Catalysis depends on Ser98, which acts as the Nucleophile. His123 is a catalytic residue.

The protein belongs to the peptidase S14 family. As to quaternary structure, fourteen ClpP subunits assemble into 2 heptameric rings which stack back to back to give a disk-like structure with a central cavity, resembling the structure of eukaryotic proteasomes.

It localises to the cytoplasm. It catalyses the reaction Hydrolysis of proteins to small peptides in the presence of ATP and magnesium. alpha-casein is the usual test substrate. In the absence of ATP, only oligopeptides shorter than five residues are hydrolyzed (such as succinyl-Leu-Tyr-|-NHMec, and Leu-Tyr-Leu-|-Tyr-Trp, in which cleavage of the -Tyr-|-Leu- and -Tyr-|-Trp bonds also occurs).. Functionally, cleaves peptides in various proteins in a process that requires ATP hydrolysis. Has a chymotrypsin-like activity. Plays a major role in the degradation of misfolded proteins. The polypeptide is ATP-dependent Clp protease proteolytic subunit (Neorickettsia sennetsu (strain ATCC VR-367 / Miyayama) (Ehrlichia sennetsu)).